The primary structure comprises 258 residues: MLAIISPAKTLDWESAVPNFTFSQPHLTAYSEKLINICRQLSPAQISSLMSISDKLAGLNVARFEQWQIEHNEQNSRAAIYAFKGDVYTGLEVETLSRDDIQFAQQHLRVLSGLYGVLRPLDLMQPYRLEMGTKLANEKGKDLYAFWGNIITDALQQAIEQQGDKILVNLASDEYYKSIQENQLGVKIIKPVFLDNKGGKYKVISFYAKKARGLMCRYIIQHRVTDIEQLKEFDLGGYQFNPSSSTQTEFVFKRDVIK.

It belongs to the UPF0246 family.

The chain is UPF0246 protein HS_0482 from Histophilus somni (strain 129Pt) (Haemophilus somnus).